A 388-amino-acid chain; its full sequence is Ras-related protein Rab-26 (388 aa).

Positions 1–115 are disordered; it reads MASTAVGLGG…HHHSQLSLTG (115 aa). Over residues 7-21 the composition is skewed to gly residues; it reads GLGGGEGDPGAGGPP. Positions 47 to 56 are enriched in basic and acidic residues; it reads RIEELRRRPF. A compositionally biased stretch (low complexity) spans 67–86; that stretch reads PASVSASITTTTTQQQQQHH. Residues 87-109 show a composition bias toward basic residues; it reads NPSHHHQSSHHQPSHHHHHHHHS. 197 to 204 is a GTP binding site; sequence GDSGVGKT. An Effector region motif is present at residues 219 to 228; sequence SFSATVGIAL. GTP is bound by residues 246 to 250 and 304 to 307; these read DTAGQ and NKAD. The S-palmitoyl cysteine moiety is linked to residue cysteine 382. A Cysteine methyl ester modification is found at cysteine 385. Residue cysteine 385 is the site of S-geranylgeranyl cysteine attachment. Residues 386-388 constitute a propeptide, removed in mature form; it reads RNM.

This sequence belongs to the small GTPase superfamily. Rab family.

The protein localises to the cell membrane. In terms of biological role, participates in exocrine secretion. The protein is Ras-related protein Rab-26 of Drosophila melanogaster (Fruit fly).